A 257-amino-acid polypeptide reads, in one-letter code: Phosphonates import ATP-binding protein PhnC (257 aa).

The ABC transporter domain maps to 4–248; sequence IEFKNVSKVY…IFSEIYGRTI (245 aa). 37–44 is a binding site for ATP; sequence GLSGAGKS.

Belongs to the ABC transporter superfamily. Phosphonates importer (TC 3.A.1.9.1) family. The complex is composed of two ATP-binding proteins (PhnC), two transmembrane proteins (PhnE) and a solute-binding protein (PhnD).

It localises to the cell membrane. The enzyme catalyses phosphonate(out) + ATP + H2O = phosphonate(in) + ADP + phosphate + H(+). Its function is as follows. Part of the ABC transporter complex PhnCDE involved in phosphonates import. Responsible for energy coupling to the transport system. The polypeptide is Phosphonates import ATP-binding protein PhnC (Staphylococcus aureus (strain bovine RF122 / ET3-1)).